The primary structure comprises 289 residues: Diaminopimelate epimerase (289 aa).

The substrate site is built by asparagine 15 and asparagine 76. The active-site Proton donor is cysteine 85. Residues glycine 86 to asparagine 87, asparagine 158, asparagine 191, and glutamate 209 to arginine 210 each bind substrate. Cysteine 218 acts as the Proton acceptor in catalysis. Substrate is bound at residue glycine 219–threonine 220.

Belongs to the diaminopimelate epimerase family. As to quaternary structure, homodimer.

Its subcellular location is the cytoplasm. The catalysed reaction is (2S,6S)-2,6-diaminopimelate = meso-2,6-diaminopimelate. The protein operates within amino-acid biosynthesis; L-lysine biosynthesis via DAP pathway; DL-2,6-diaminopimelate from LL-2,6-diaminopimelate: step 1/1. Its function is as follows. Catalyzes the stereoinversion of LL-2,6-diaminopimelate (L,L-DAP) to meso-diaminopimelate (meso-DAP), a precursor of L-lysine and an essential component of the bacterial peptidoglycan. The sequence is that of Diaminopimelate epimerase from Streptomyces coelicolor (strain ATCC BAA-471 / A3(2) / M145).